Consider the following 20-residue polypeptide: Protein PR-L6 (20 aa).

It belongs to the BetVI family.

This is Protein PR-L6 from Lupinus luteus (European yellow lupine).